The primary structure comprises 331 residues: Ketol-acid reductoisomerase (NADP(+)) (331 aa).

Residues 2–182 (ARLYYDADAN…GGTRAGILET (181 aa)) form the KARI N-terminal Rossmann domain. NADP(+) is bound by residues 25-28 (YGSQ), serine 51, serine 53, and 83-86 (DEVQ). Histidine 108 is a catalytic residue. Glycine 134 is an NADP(+) binding site. In terms of domain architecture, KARI C-terminal knotted spans 183–328 (TFREETETDL…KDLRAMFSWT (146 aa)). Aspartate 191, glutamate 195, glutamate 227, and glutamate 231 together coordinate Mg(2+). Serine 252 lines the substrate pocket.

Belongs to the ketol-acid reductoisomerase family. The cofactor is Mg(2+).

The enzyme catalyses (2R)-2,3-dihydroxy-3-methylbutanoate + NADP(+) = (2S)-2-acetolactate + NADPH + H(+). The catalysed reaction is (2R,3R)-2,3-dihydroxy-3-methylpentanoate + NADP(+) = (S)-2-ethyl-2-hydroxy-3-oxobutanoate + NADPH + H(+). Its pathway is amino-acid biosynthesis; L-isoleucine biosynthesis; L-isoleucine from 2-oxobutanoate: step 2/4. The protein operates within amino-acid biosynthesis; L-valine biosynthesis; L-valine from pyruvate: step 2/4. Its function is as follows. Involved in the biosynthesis of branched-chain amino acids (BCAA). Catalyzes an alkyl-migration followed by a ketol-acid reduction of (S)-2-acetolactate (S2AL) to yield (R)-2,3-dihydroxy-isovalerate. In the isomerase reaction, S2AL is rearranged via a Mg-dependent methyl migration to produce 3-hydroxy-3-methyl-2-ketobutyrate (HMKB). In the reductase reaction, this 2-ketoacid undergoes a metal-dependent reduction by NADPH to yield (R)-2,3-dihydroxy-isovalerate. The polypeptide is Ketol-acid reductoisomerase (NADP(+)) (Acaryochloris marina (strain MBIC 11017)).